A 132-amino-acid chain; its full sequence is Large ribosomal subunit protein uL14 (132 aa).

It belongs to the universal ribosomal protein uL14 family. As to quaternary structure, part of the 50S ribosomal subunit. Forms a cluster with proteins L3 and L24e, part of which may contact the 16S rRNA in 2 intersubunit bridges.

In terms of biological role, binds to 23S rRNA. Forms part of two intersubunit bridges in the 70S ribosome. The sequence is that of Large ribosomal subunit protein uL14 from Methanococcus maripaludis (strain C5 / ATCC BAA-1333).